The following is a 204-amino-acid chain: Proteasome subunit beta (204 aa).

Residues 1 to 8 (MDDKILEG) constitute a propeptide, removed in mature form; by autocatalysis. Thr-9 serves as the catalytic Nucleophile.

Belongs to the peptidase T1B family. The 20S proteasome core is composed of 14 alpha and 14 beta subunits that assemble into four stacked heptameric rings, resulting in a barrel-shaped structure. The two inner rings, each composed of seven catalytic beta subunits, are sandwiched by two outer rings, each composed of seven alpha subunits. The catalytic chamber with the active sites is on the inside of the barrel. Has a gated structure, the ends of the cylinder being occluded by the N-termini of the alpha-subunits. Is capped at one or both ends by the proteasome regulatory ATPase, PAN.

The protein resides in the cytoplasm. It catalyses the reaction Cleavage of peptide bonds with very broad specificity.. With respect to regulation, the formation of the proteasomal ATPase PAN-20S proteasome complex, via the docking of the C-termini of PAN into the intersubunit pockets in the alpha-rings, triggers opening of the gate for substrate entry. Interconversion between the open-gate and close-gate conformations leads to a dynamic regulation of the 20S proteasome proteolysis activity. Component of the proteasome core, a large protease complex with broad specificity involved in protein degradation. The sequence is that of Proteasome subunit beta from Methanobrevibacter smithii (strain ATCC 35061 / DSM 861 / OCM 144 / PS).